Reading from the N-terminus, the 370-residue chain is Chaperone protein DnaJ (370 aa).

In terms of domain architecture, J spans 5-69; sequence DYYEVLGVDR…QKKAHYDQFG (65 aa). Residues 128-210 form a CR-type zinc finger; sequence GKETTIEIPR…CGGKGKVRKR (83 aa). Zn(2+)-binding residues include Cys141, Cys144, Cys158, Cys161, Cys184, Cys187, Cys198, and Cys201. CXXCXGXG motif repeat units lie at residues 141–148, 158–165, 184–191, and 198–205; these read CHTCSGSG, CPHCGGSG, CHHCEGTG, and CATCGGKG.

It belongs to the DnaJ family. As to quaternary structure, homodimer. It depends on Zn(2+) as a cofactor.

It localises to the cytoplasm. Its function is as follows. Participates actively in the response to hyperosmotic and heat shock by preventing the aggregation of stress-denatured proteins and by disaggregating proteins, also in an autonomous, DnaK-independent fashion. Unfolded proteins bind initially to DnaJ; upon interaction with the DnaJ-bound protein, DnaK hydrolyzes its bound ATP, resulting in the formation of a stable complex. GrpE releases ADP from DnaK; ATP binding to DnaK triggers the release of the substrate protein, thus completing the reaction cycle. Several rounds of ATP-dependent interactions between DnaJ, DnaK and GrpE are required for fully efficient folding. Also involved, together with DnaK and GrpE, in the DNA replication of plasmids through activation of initiation proteins. The protein is Chaperone protein DnaJ of Halalkalibacterium halodurans (strain ATCC BAA-125 / DSM 18197 / FERM 7344 / JCM 9153 / C-125) (Bacillus halodurans).